The sequence spans 694 residues: Potassium-transporting ATPase ATP-binding subunit (694 aa).

4 helical membrane-spanning segments follow: residues 36 to 56, 62 to 82, 218 to 238, and 249 to 269; these read VMFV…RDLI, LAFS…ANFA, IALN…TATI, and IPII…IGAL. The 4-aspartylphosphate intermediate role is filled by aspartate 306. ATP-binding positions include aspartate 343, glutamate 347, 376–383, and lysine 394; that span reads FTAQTRMS. Residues aspartate 530 and aspartate 534 each coordinate Mg(2+). Transmembrane regions (helical) follow at residues 600–620, 628–648, and 666–686; these read FAII…LNVM, AILS…PLSL, and LVIY…LIDL.

This sequence belongs to the cation transport ATPase (P-type) (TC 3.A.3) family. Type IA subfamily. As to quaternary structure, the system is composed of three essential subunits: KdpA, KdpB and KdpC.

The protein resides in the cell inner membrane. It catalyses the reaction K(+)(out) + ATP + H2O = K(+)(in) + ADP + phosphate + H(+). Part of the high-affinity ATP-driven potassium transport (or Kdp) system, which catalyzes the hydrolysis of ATP coupled with the electrogenic transport of potassium into the cytoplasm. This subunit is responsible for energy coupling to the transport system and for the release of the potassium ions to the cytoplasm. This is Potassium-transporting ATPase ATP-binding subunit from Agrobacterium fabrum (strain C58 / ATCC 33970) (Agrobacterium tumefaciens (strain C58)).